The following is a 320-amino-acid chain: o-succinylbenzoate synthase (320 aa).

Lys133 functions as the Proton donor in the catalytic mechanism. Residues Asp161, Glu190, and Asp213 each contribute to the Mg(2+) site. The Proton acceptor role is filled by Lys235.

This sequence belongs to the mandelate racemase/muconate lactonizing enzyme family. MenC type 1 subfamily. A divalent metal cation is required as a cofactor.

It carries out the reaction (1R,6R)-6-hydroxy-2-succinyl-cyclohexa-2,4-diene-1-carboxylate = 2-succinylbenzoate + H2O. The protein operates within quinol/quinone metabolism; 1,4-dihydroxy-2-naphthoate biosynthesis; 1,4-dihydroxy-2-naphthoate from chorismate: step 4/7. Its pathway is quinol/quinone metabolism; menaquinone biosynthesis. Functionally, converts 2-succinyl-6-hydroxy-2,4-cyclohexadiene-1-carboxylate (SHCHC) to 2-succinylbenzoate (OSB). The polypeptide is o-succinylbenzoate synthase (Escherichia coli O6:K15:H31 (strain 536 / UPEC)).